A 324-amino-acid chain; its full sequence is Interleukin-12 subunit beta (324 aa).

The first 22 residues, 1-22 (MHLQQLVVSWFSLVWLASPIVA), serve as a signal peptide directing secretion. The Ig-like C2-type domain maps to 23–106 (IWELEKNVYV…LSQSLLLLHK (84 aa)). Cys50 and Cys90 are disulfide-bonded. N-linked (GlcNAc...) asparagine glycosylation is found at Asn125, Asn135, and Asn218. The Fibronectin type-III domain occupies 233-324 (PPKNLQLNPL…WSEWASVSCN (92 aa)).

It belongs to the IL-12B family. As to quaternary structure, heterodimer with IL12A; disulfide-linked. The heterodimer is known as interleukin IL-12. Heterodimer with IL23A; disulfide-linked. The heterodimer is known as interleukin IL-23. Also secreted as a monomer. Interacts with NBR1; this interaction promotes IL-12 secretion.

It is found in the secreted. Functionally, cytokine that can act as a growth factor for activated T and NK cells, enhance the lytic activity of NK/lymphokine-activated killer cells, and stimulate the production of IFN-gamma by resting PBMC. Its function is as follows. Associates with IL23A to form the IL-23 interleukin, a heterodimeric cytokine which functions in innate and adaptive immunity. IL-23 may constitute with IL-17 an acute response to infection in peripheral tissues. IL-23 binds to a heterodimeric receptor complex composed of IL12RB1 and IL23R, activates the Jak-Stat signaling cascade, stimulates memory rather than naive T-cells and promotes production of pro-inflammatory cytokines. IL-23 induces autoimmune inflammation and thus may be responsible for autoimmune inflammatory diseases and may be important for tumorigenesis. The sequence is that of Interleukin-12 subunit beta (IL12B) from Sus scrofa (Pig).